A 311-amino-acid chain; its full sequence is Ornithine carbamoyltransferase (311 aa).

Carbamoyl phosphate-binding positions include 59–62 (STRT), Gln86, Arg110, and 137–140 (HPCQ). L-ornithine contacts are provided by residues Asn168, Asp228, and 232-233 (SM). Carbamoyl phosphate-binding positions include 267–268 (CL) and Arg295.

Belongs to the aspartate/ornithine carbamoyltransferase superfamily. OTCase family.

The protein resides in the cytoplasm. The enzyme catalyses carbamoyl phosphate + L-ornithine = L-citrulline + phosphate + H(+). It participates in amino-acid biosynthesis; L-arginine biosynthesis; L-arginine from L-ornithine and carbamoyl phosphate: step 1/3. In terms of biological role, reversibly catalyzes the transfer of the carbamoyl group from carbamoyl phosphate (CP) to the N(epsilon) atom of ornithine (ORN) to produce L-citrulline. This Caulobacter vibrioides (strain ATCC 19089 / CIP 103742 / CB 15) (Caulobacter crescentus) protein is Ornithine carbamoyltransferase.